The following is a 462-amino-acid chain: Protein Tube (462 aa).

Residues Tyr-27–Phe-152 enclose the Death domain. Positions Arg-218–Asn-265 are disordered. The segment covering Thr-249–Thr-259 has biased composition (low complexity). 2 repeat units span residues Asn-262–Leu-269 and Asn-286–Leu-293. Positions Asn-262–Leu-460 are 5 X approximate repeats. Positions Arg-301–Pro-317 are enriched in polar residues. A disordered region spans residues Arg-301–Gln-462. Repeat 3 spans residues Asn-319 to Leu-326. The span at Ala-342–Ser-354 shows a compositional bias: low complexity. Over residues Asn-355–Lys-367 the composition is skewed to polar residues. Repeat unit 4 spans residues Asn-356–Leu-363. A compositionally biased stretch (basic and acidic residues) spans Gly-368–Ser-377. Residues Asp-387–Pro-403 show a composition bias toward acidic residues. Residues Asn-409–Leu-424 show a composition bias toward low complexity. Polar residues predominate over residues Thr-425–Leu-438. A compositionally biased stretch (low complexity) spans Thr-439–Asp-449. Repeat unit 5 spans residues Asn-453–Leu-460.

In terms of assembly, interacts (via Death domain) with pll (via Death domain). Post-translationally, phosphorylated by pll.

The protein resides in the cytoplasm. It is found in the cell membrane. Functionally, plays an essential role in the Tl receptor signaling pathway that establishes embryonic dorsoventral polarity; the signal directs import of dl into ventral and ventrolateral nuclei, thereby establishing dorsoventral polarity. Tub recruits pll to the plasma membrane and protein-protein interaction activates pll. Also has a role in pupal pattern formation. The sequence is that of Protein Tube (tub) from Drosophila melanogaster (Fruit fly).